Reading from the N-terminus, the 225-residue chain is Heptaprenylglyceryl phosphate synthase (225 aa).

K6 serves as a coordination point for sn-glycerol 1-phosphate. Positions 8 and 34 each coordinate Mg(2+). Residues 153–158 (YVEYSG), G183, and 203–204 (GN) contribute to the sn-glycerol 1-phosphate site.

This sequence belongs to the GGGP/HepGP synthase family. Group I subfamily. In terms of assembly, homodimer. The cofactor is Mg(2+).

It carries out the reaction sn-glycerol 1-phosphate + all-trans-heptaprenyl diphosphate = 3-heptaprenyl-sn-glycero-1-phosphate + diphosphate. Its pathway is membrane lipid metabolism; glycerophospholipid metabolism. Prenyltransferase that catalyzes in vivo the transfer of the heptaprenyl moiety of heptaprenyl pyrophosphate (HepPP; 35 carbon atoms) to the C3 hydroxyl of sn-glycerol-1-phosphate (G1P), producing heptaprenylglyceryl phosphate (HepGP). This reaction is an ether-bond-formation step in the biosynthesis of archaea-type G1P-based membrane lipids found in Bacillales. To a much lesser extent, is also able to use geranylgeranyl diphosphate (GGPP; C20) as the prenyl donor. This is Heptaprenylglyceryl phosphate synthase from Listeria monocytogenes serovar 1/2a (strain ATCC BAA-679 / EGD-e).